The following is a 657-amino-acid chain: Glycogen debranching enzyme (657 aa).

Catalysis depends on D334, which acts as the Nucleophile. The active-site Proton donor is E369. Positions A458 to T485 are disordered. Residues D465–H475 show a composition bias toward polar residues.

Belongs to the glycosyl hydrolase 13 family.

It localises to the cytoplasm. The enzyme catalyses Hydrolysis of (1-&gt;6)-alpha-D-glucosidic linkages to branches with degrees of polymerization of three or four glucose residues in limit dextrin.. It participates in glycan degradation; glycogen degradation. Its activity is regulated as follows. Slightly activated by Ca(2+). Inhibited by divalent cations such as Zn(2+), Cu(2+), Fe(2+), Mg(2+), Mn(2+), but only slightly inhibited by EDTA. Its function is as follows. Removes maltotriose and maltotetraose chains that are attached by 1,6-alpha-linkage to the limit dextrin main chain, generating a debranched limit dextrin. Hydrolyzes the alpha-1,6-glycosidic linkages in amylopectin while does not hydrolyze the alpha-1,4-glycosidic linkages in amylose. Native glycogen is a poor substrate. The polypeptide is Glycogen debranching enzyme (Dickeya chrysanthemi (Pectobacterium chrysanthemi)).